Here is a 386-residue protein sequence, read N- to C-terminus: Leupaxin (386 aa).

Met1 carries the N-acetylmethionine modification. Residues 3–15 carry the LD motif 1 motif; that stretch reads ELDALLEELERCT. Ser19 carries the post-translational modification Phosphoserine. Residues 19–52 form a disordered region; it reads SEEYSNPVSCHLDQQSTEESKIPQTPKTLSSQGN. Tyr22 carries the phosphotyrosine modification. Residues 22-52 show a composition bias toward polar residues; sequence YSNPVSCHLDQQSTEESKIPQTPKTLSSQGN. Position 54 is a phosphoserine (Ser54). Tyr62 bears the Phosphotyrosine mark. 2 short sequence motifs (LD motif) span residues 70-82 and 92-103; these read NVYSEVQEPKESV and QLDELMAHLSEM. Tyr72 bears the Phosphotyrosine; by LYN mark. Ser81 carries the phosphoserine modification. 4 LIM zinc-binding domains span residues 150–208, 209–267, 268–326, and 327–386; these read GYCA…RLFS, PRCA…AMFS, PKCG…HRRG, and TLCH…LFSQ.

Belongs to the paxillin family. Interacts with unphosphorylated ITGA4. Interacts with AR and SRF. Interacts with PTK2B/PYK2, PTPN22 and PTPN12. Interacts (via LD motif 3) with LYN and the interaction is induced upon B-cell antigen receptor (BCR) activation. Interacts (via LD motif 3) with PTK2/FAK. Post-translationally, phosphorylated on tyrosine residues. Phosphorylation on Tyr-72 is important for its inhibitory function. Bombesin stimulates phosphorylation on Tyr-22, Tyr-62 and Tyr-72. Expressed in osteoclasts (at protein level). Highly expressed in vascular smooth muscle.

It localises to the cytoplasm. Its subcellular location is the cell junction. It is found in the focal adhesion. The protein resides in the nucleus. The protein localises to the perinuclear region. It localises to the cell projection. Its subcellular location is the podosome. It is found in the cell membrane. Transcriptional coactivator for androgen receptor (AR) and serum response factor (SRF). Contributes to the regulation of cell adhesion, spreading and cell migration and acts as a negative regulator in integrin-mediated cell adhesion events. Suppresses the integrin-induced tyrosine phosphorylation of paxillin (PXN). May play a critical role as an adapter protein in the formation of the adhesion zone in osteoclasts. Negatively regulates B-cell antigen receptor (BCR) signaling. This chain is Leupaxin (Lpxn), found in Mus musculus (Mouse).